The chain runs to 831 residues: Thymine dioxygenase JBP1-B (831 aa).

A thymine dioxygenase region spans residues 80 to 282; the sequence is VVGGVLLPGA…RLTCVCYYRA (203 aa). Fe cation contacts are provided by H207, D209, and H257. Residue R273 participates in 2-oxoglutarate binding. The tract at residues 409 to 578 is DNA-binding JBP1 domain; it reads LGGALKAAEE…IEEARRRGNA (170 aa).

This sequence belongs to the TET family. JBP1 subfamily. As to quaternary structure, monomer. Binds to DNA as a monomer. Fe(2+) serves as cofactor.

It localises to the nucleus. The enzyme catalyses thymine + 2-oxoglutarate + O2 = 5-hydroxymethyluracil + succinate + CO2. In terms of biological role, dioxygenase that catalyzes the first step of DNA base J (beta-d-glucosyl-HOMedU) biosynthesis by converting thymine to 5-hydroxymethyluracil (HOMedU). DNA base J is a hypermodified thymidine residue found in the genome of kinetoplastid parasites, which is localized primarily to repetitive DNA, namely the telomeres, and is implicated in the regulation of antigenic variation. Also specifically binds to base J-containing DNA (J-DNA). Involved in propagation and maintenance of DNA base J synthesis initiated by JBP2 by specifically binding already synthesized DNA base J and propagating J synthesis. Thymine dioxygenase activity and J-DNA-binding are independent functions. The polypeptide is Thymine dioxygenase JBP1-B (JBP1B) (Trypanosoma cruzi (strain CL Brener)).